Reading from the N-terminus, the 417-residue chain is D-galactonate dehydratase family member SeV_A0456 (417 aa).

Substrate contacts are provided by Gln-43 and His-127. Tyr-158 functions as the Proton donor/acceptor in the catalytic mechanism. Position 223 (Asp-223) interacts with Mg(2+). Catalysis depends on His-225, which acts as the Proton donor/acceptor. Mg(2+) is bound by residues Glu-249 and Glu-275. Substrate is bound by residues Glu-275, Arg-296, His-325, Asp-329, and Glu-352.

Belongs to the mandelate racemase/muconate lactonizing enzyme family. GalD subfamily. Mg(2+) is required as a cofactor.

The catalysed reaction is D-gluconate = 2-dehydro-3-deoxy-D-gluconate + H2O. Has low D-gluconate dehydratase activity (in vitro), suggesting that it has no significant role in D-gluconate degradation in vivo. Has no detectable activity with a panel of 70 other acid sugars (in vitro). This chain is D-galactonate dehydratase family member SeV_A0456, found in Salmonella virchow (strain SL491).